The following is a 226-amino-acid chain: PKHD-type hydroxylase PFL_0865 (226 aa).

Residues 78–178 (KVFPPLINCY…RYASFFWTQS (101 aa)) enclose the Fe2OG dioxygenase domain. His96, Asp98, and His159 together coordinate Fe cation. Arg169 lines the 2-oxoglutarate pocket.

Fe(2+) serves as cofactor. It depends on L-ascorbate as a cofactor.

In Pseudomonas fluorescens (strain ATCC BAA-477 / NRRL B-23932 / Pf-5), this protein is PKHD-type hydroxylase PFL_0865.